The following is a 156-amino-acid chain: Cytochrome c-type biogenesis protein CcmE 2 (156 aa).

The Cytoplasmic portion of the chain corresponds to Met-1–Arg-8. Residues Leu-9–Ala-29 traverse the membrane as a helical; Signal-anchor for type II membrane protein segment. The Periplasmic portion of the chain corresponds to Leu-30–Gln-156. 2 residues coordinate heme: His-123 and Tyr-127. Positions Met-136–Gln-156 are disordered.

It belongs to the CcmE/CycJ family.

The protein localises to the cell inner membrane. Functionally, heme chaperone required for the biogenesis of c-type cytochromes. Transiently binds heme delivered by CcmC and transfers the heme to apo-cytochromes in a process facilitated by CcmF and CcmH. In Xanthomonas axonopodis pv. citri (strain 306), this protein is Cytochrome c-type biogenesis protein CcmE 2.